The primary structure comprises 557 residues: Enhancer of polycomb-like protein 1 (557 aa).

2 disordered regions span residues 323–349 and 424–449; these read VKPAAPVPTPAPPVKTSPHPASYRPQP and QSHNQLSIPSSTPSTPLSDNGPTYST. The segment covering 327–337 has biased composition (pro residues); the sequence is APVPTPAPPVK. Residues 429 to 441 are compositionally biased toward low complexity; sequence LSIPSSTPSTPLS.

It belongs to the enhancer of polycomb family. Component of the NuA4 histone acetyltransferase complex.

Its subcellular location is the nucleus. Component of the NuA4 histone acetyltransferase complex which is involved in transcriptional activation of selected genes principally by acetylation of nucleosomal histone H4 and H2A. The NuA4 complex is also involved in DNA repair. Involved in gene silencing by neighboring heterochromatin, blockage of the silencing spreading along the chromosome, and required for cell cycle progression through G2/M. The sequence is that of Enhancer of polycomb-like protein 1 (epl1) from Schizosaccharomyces pombe (strain 972 / ATCC 24843) (Fission yeast).